The primary structure comprises 185 residues: Transcription termination/antitermination protein NusG (185 aa).

The KOW domain occupies 134-162 (PGQMVRVIDGPFNDFDGLVEEVNYEKNRL).

This sequence belongs to the NusG family.

Participates in transcription elongation, termination and antitermination. The chain is Transcription termination/antitermination protein NusG from Xylella fastidiosa (strain Temecula1 / ATCC 700964).